A 261-amino-acid chain; its full sequence is Indole-3-glycerol phosphate synthase (261 aa).

Belongs to the TrpC family.

The enzyme catalyses 1-(2-carboxyphenylamino)-1-deoxy-D-ribulose 5-phosphate + H(+) = (1S,2R)-1-C-(indol-3-yl)glycerol 3-phosphate + CO2 + H2O. It functions in the pathway amino-acid biosynthesis; L-tryptophan biosynthesis; L-tryptophan from chorismate: step 4/5. This is Indole-3-glycerol phosphate synthase from Burkholderia cenocepacia (strain HI2424).